The following is a 59-amino-acid chain: Protein translocase subunit SecE (59 aa).

The chain crosses the membrane as a helical span at residues 39–59 (VMALFLGLIDALFVALLSFFF).

Belongs to the SecE/SEC61-gamma family. In terms of assembly, component of the Sec protein translocase complex. Heterotrimer consisting of SecY, SecE and SecG subunits. The heterotrimers can form oligomers, although 1 heterotrimer is thought to be able to translocate proteins. Interacts with the ribosome. Interacts with SecDF, and other proteins may be involved. Interacts with SecA.

It is found in the cell inner membrane. Functionally, essential subunit of the Sec protein translocation channel SecYEG. Clamps together the 2 halves of SecY. May contact the channel plug during translocation. The protein is Protein translocase subunit SecE of Treponema pallidum (strain Nichols).